The sequence spans 70 residues: Putative membrane protein insertion efficiency factor (70 aa).

This sequence belongs to the UPF0161 family.

The protein resides in the cell inner membrane. In terms of biological role, could be involved in insertion of integral membrane proteins into the membrane. In Methylobacillus flagellatus (strain ATCC 51484 / DSM 6875 / VKM B-1610 / KT), this protein is Putative membrane protein insertion efficiency factor.